We begin with the raw amino-acid sequence, 525 residues long: Serine/threonine protein phosphatase 2A 55 kDa regulatory subunit B beta isoform (525 aa).

The tract at residues 1–31 (MDPFSKSPDDDDLRPEAEAARRPQPQPQPRE) is disordered. WD repeat units follow at residues 48–87 (QEVDIISAIEFDKSGDHLATGDRGGRVVLFERTDSRDSAS) and 124–165 (EIEE…VKRI). The interval 169-191 (NLNTSQSSGNGTTSSSSSSSSRA) is disordered. The segment covering 171–189 (NTSQSSGNGTTSSSSSSSS) has biased composition (low complexity). WD repeat units lie at residues 244–282 (AHDYHINSISNNSDGETYISADDLRINLWNLEISNQSFN), 293–333 (DLTE…LCDN), 352–390 (EIIASVSDIKFARDGRHILSRDYMTLKLWDINMDSGPVA), and 495–525 (DLSTKLLHLAWHPTENSIACAAANSLYMYYA).

The protein belongs to the phosphatase 2A regulatory subunit B family. As to quaternary structure, PP2A consists of a common heteromeric enzyme, composed of a catalytic subunit (subunits C), a constant regulatory subunit (subunit A), and a variety of regulatory subunits such as subunits B (the R2/B/PR55/B55, R3/B''/PR72/PR130/PR59 and R5/B'/B56 families).

Functionally, the B regulatory subunit may modulate substrate selectivity and catalytic activity, and may also direct the localization of the catalytic enzyme to a particular subcellular compartment. In Oryza sativa subsp. indica (Rice), this protein is Serine/threonine protein phosphatase 2A 55 kDa regulatory subunit B beta isoform.